We begin with the raw amino-acid sequence, 219 residues long: RNA chaperone ProQ (219 aa).

The disordered stretch occupies residues 102-160 (TLKESQDKAKAKRAERSKDEGDAADKAPRKPKRKPQPQARRDAKPAAKDKPKAAPKAPA). Composition is skewed to basic and acidic residues over residues 105–129 (ESQD…DKAP) and 140–153 (ARRD…DKPK).

It belongs to the ProQ family.

It localises to the cytoplasm. In terms of biological role, RNA chaperone with significant RNA binding, RNA strand exchange and RNA duplexing activities. The polypeptide is RNA chaperone ProQ (Shewanella amazonensis (strain ATCC BAA-1098 / SB2B)).